The following is a 208-amino-acid chain: Glycerol-3-phosphate acyltransferase (208 aa).

6 helical membrane passes run 7–27 (PNIHFYLLAYFIGGIPFGYLL), 63–83 (MMAALTMLLDALKGALVILVA), 86–106 (AGMSVETQWAIAVLAVVGHCF), 123–143 (GVMAVMLPLEAAIGLVVWLVV), 149–169 (ISSLSSLLGLGALLISSFLIH), and 170–190 (PEIPEIGTHAPLLIIAFVIFY).

Belongs to the PlsY family. Probably interacts with PlsX.

It localises to the cell inner membrane. It carries out the reaction an acyl phosphate + sn-glycerol 3-phosphate = a 1-acyl-sn-glycero-3-phosphate + phosphate. Its pathway is lipid metabolism; phospholipid metabolism. Its function is as follows. Catalyzes the transfer of an acyl group from acyl-phosphate (acyl-PO(4)) to glycerol-3-phosphate (G3P) to form lysophosphatidic acid (LPA). This enzyme utilizes acyl-phosphate as fatty acyl donor, but not acyl-CoA or acyl-ACP. The protein is Glycerol-3-phosphate acyltransferase of Wolinella succinogenes (strain ATCC 29543 / DSM 1740 / CCUG 13145 / JCM 31913 / LMG 7466 / NCTC 11488 / FDC 602W) (Vibrio succinogenes).